The following is a 382-amino-acid chain: Caspase-1-B (382 aa).

The propeptide occupies 1–98 (MTAQLNKVRK…HEHAPSPIQE (98 aa)). Residues histidine 216 and cysteine 270 contribute to the active site. Positions 283–292 (DVAPAPLEDD) are excised as a propeptide.

The protein belongs to the peptidase C14A family. Heterotetramer that consists of two anti-parallel arranged heterodimers, each one formed by a 20 kDa (Caspase-1 subunit p20) and a 10 kDa (Caspase-1 subunit p10) subunit. As to quaternary structure, heterotetramer that consists of two anti-parallel arranged heterodimers, each one formed by a 20 kDa (Caspase-1 subunit p20) and a 10 kDa (Caspase-1 subunit p10) subunit. Can form a heterodimer with isoform epsilon which then has an inhibitory effect. Post-translationally, the two subunits are derived from the precursor sequence by an autocatalytic mechanism.

It is found in the cytoplasm. Its subcellular location is the cell membrane. It carries out the reaction Strict requirement for an Asp residue at position P1 and has a preferred cleavage sequence of Tyr-Val-Ala-Asp-|-.. Thiol protease involved in a variety of inflammatory processes by proteolytically cleaving other proteins, such as the precursors of the inflammatory cytokines interleukin-1 beta (IL1B) and interleukin 18 (IL18) as well as the pyroptosis inducer Gasdermin-D (GSDMD), into active mature peptides. Plays a key role in cell immunity as an inflammatory response initiator: once activated through formation of an inflammasome complex, it initiates a pro-inflammatory response through the cleavage of the two inflammatory cytokines IL1B and IL18, releasing the mature cytokines which are involved in a variety of inflammatory processes. Cleaves a tetrapeptide after an Asp residue at position P1. Also initiates pyroptosis, a programmed lytic cell death pathway, through cleavage of GSDMD. The sequence is that of Caspase-1-B (casp1-b) from Xenopus laevis (African clawed frog).